We begin with the raw amino-acid sequence, 249 residues long: Cysteine-rich secretory protein 1 (249 aa).

A signal peptide spans 1-20; that stretch reads MEIKHLLFLVAAACLLPVLS. The 131-residue stretch at 45-175 folds into the SCP domain; sequence VNIHNTLRRG…SPRYFYVCHY (131 aa). Asn-104 carries N-linked (GlcNAc...) asparagine glycosylation. Disulfide bonds link Cys-195-Cys-202, Cys-198-Cys-207, Cys-211-Cys-244, Cys-220-Cys-238, and Cys-229-Cys-242. The region spanning 211–244 is the ShKT domain; sequence CIYYDEYTDCSLEVRFLGCNHSTPRMFCKATCLC. N-linked (GlcNAc...) asparagine glycosylation occurs at Asn-230.

Belongs to the CRISP family. Expressed in all the regions of the epididymis except the caput and is not detected in the testis, prostate, seminal vesicle, and brain.

In terms of biological role, may have a role in sperm-egg fusion and maturation. This Macaca mulatta (Rhesus macaque) protein is Cysteine-rich secretory protein 1 (CRISP1).